The sequence spans 150 residues: Aspartate carbamoyltransferase regulatory chain (150 aa).

Residues cysteine 105, cysteine 110, cysteine 133, and cysteine 136 each contribute to the Zn(2+) site.

It belongs to the PyrI family. In terms of assembly, contains catalytic and regulatory chains. Zn(2+) is required as a cofactor.

In terms of biological role, involved in allosteric regulation of aspartate carbamoyltransferase. This is Aspartate carbamoyltransferase regulatory chain from Thermococcus sibiricus (strain DSM 12597 / MM 739).